The following is a 789-amino-acid chain: DNA topoisomerase 4 subunit A (789 aa).

Positions 34 to 499 (LPDLRDGLKP…EKQKVQDSDF (466 aa)) constitute a Topo IIA-type catalytic domain. Tyrosine 122 serves as the catalytic O-(5'-phospho-DNA)-tyrosine intermediate.

The protein belongs to the type II topoisomerase GyrA/ParC subunit family. ParC type 2 subfamily. Heterotetramer composed of ParC and ParE.

The protein resides in the cell membrane. The catalysed reaction is ATP-dependent breakage, passage and rejoining of double-stranded DNA.. Functionally, topoisomerase IV is essential for chromosome segregation. It relaxes supercoiled DNA. Performs the decatenation events required during the replication of a circular DNA molecule. The chain is DNA topoisomerase 4 subunit A from Mycoplasma pneumoniae (strain ATCC 29342 / M129 / Subtype 1) (Mycoplasmoides pneumoniae).